Consider the following 410-residue polypeptide: Argininosuccinate synthase (410 aa).

Residues 14–22 (AYSGGLDTS) and Ala-41 contribute to the ATP site. Residues Tyr-92 and Ser-97 each coordinate L-citrulline. Gly-122 lines the ATP pocket. The L-aspartate site is built by Thr-124, Asn-128, and Asp-129. Asn-128 serves as a coordination point for L-citrulline. The L-citrulline site is built by Arg-132, Ser-183, Ser-192, Glu-268, and Tyr-280.

Belongs to the argininosuccinate synthase family. Type 1 subfamily. In terms of assembly, homotetramer.

It localises to the cytoplasm. The catalysed reaction is L-citrulline + L-aspartate + ATP = 2-(N(omega)-L-arginino)succinate + AMP + diphosphate + H(+). Its pathway is amino-acid biosynthesis; L-arginine biosynthesis; L-arginine from L-ornithine and carbamoyl phosphate: step 2/3. This Parvibaculum lavamentivorans (strain DS-1 / DSM 13023 / NCIMB 13966) protein is Argininosuccinate synthase.